Reading from the N-terminus, the 229-residue chain is Histone H1 (229 aa).

Disordered regions lie at residues 1-52 (MADT…SSHP) and 125-229 (APAL…RTRK). Basic residues predominate over residues 32-45 (KEKKKVIAAKKPKS). In terms of domain architecture, H15 spans 50–119 (SHPSFFEMIS…KVKNSFKLPS (70 aa)). Positions 125–138 (APALAKKPTIPKPK) are enriched in low complexity. Over residues 139–160 (VAAKPKTAKIGAKPKAKAKVAA) the composition is skewed to basic residues. Low complexity-rich tracts occupy residues 161–177 (KTKA…PAAK) and 185–205 (KPKT…VASP). A compositionally biased stretch (basic residues) spans 206–229 (GKKKAVPVKKVKTVKSPAGKRTRK).

It belongs to the histone H1/H5 family.

The protein resides in the nucleus. It is found in the chromosome. In terms of biological role, histones H1 are necessary for the condensation of nucleosome chains into higher-order structures. In Euphorbia esula (Leafy spurge), this protein is Histone H1.